Here is a 493-residue protein sequence, read N- to C-terminus: Cytochrome P450 2E1 (493 aa).

298-303 (FAGTET) is a substrate binding site. Cys437 contributes to the heme binding site.

It belongs to the cytochrome P450 family. As to quaternary structure, interacts with chaperones HSP70 and HSP90; this interaction is required for initial targeting to mitochondria. It depends on heme as a cofactor.

Its subcellular location is the endoplasmic reticulum membrane. The protein localises to the microsome membrane. It localises to the mitochondrion inner membrane. The catalysed reaction is an organic molecule + reduced [NADPH--hemoprotein reductase] + O2 = an alcohol + oxidized [NADPH--hemoprotein reductase] + H2O + H(+). It carries out the reaction (5Z,8Z,11Z)-eicosatrienoate + reduced [NADPH--hemoprotein reductase] + O2 = 19-hydroxy-(5Z,8Z,11Z)-eicosatrienoate + oxidized [NADPH--hemoprotein reductase] + H2O + H(+). The enzyme catalyses (5Z,8Z,11Z,14Z,17Z)-eicosapentaenoate + reduced [NADPH--hemoprotein reductase] + O2 = 19-hydroxy-(5Z,8Z,11Z,14Z,17Z)-eicosapentaenoate + oxidized [NADPH--hemoprotein reductase] + H2O + H(+). It catalyses the reaction (4Z,7Z,10Z,13Z,16Z,19Z)-docosahexaenoate + reduced [NADPH--hemoprotein reductase] + O2 = 21-hydroxy-(4Z,7Z,10Z,13Z,16Z,19Z)-docosahexaenoate + oxidized [NADPH--hemoprotein reductase] + H2O + H(+). The catalysed reaction is dodecanoate + reduced [NADPH--hemoprotein reductase] + O2 = 11-hydroxydodecanoate + oxidized [NADPH--hemoprotein reductase] + H2O + H(+). It carries out the reaction tetradecanoate + reduced [NADPH--hemoprotein reductase] + O2 = 13-hydroxytetradecanoate + oxidized [NADPH--hemoprotein reductase] + H2O + H(+). The enzyme catalyses 4-nitrophenol + NADPH + O2 + H(+) = 4-nitrocatechol + NADP(+) + H2O. It participates in lipid metabolism; fatty acid metabolism. With respect to regulation, the omega-1 hydroxylase activity is stimulated by cytochrome b5. Its function is as follows. A cytochrome P450 monooxygenase involved in the metabolism of fatty acids. Mechanistically, uses molecular oxygen inserting one oxygen atom into a substrate, and reducing the second into a water molecule, with two electrons provided by NADPH via cytochrome P450 reductase (NADPH--hemoprotein reductase). Catalyzes the hydroxylation of carbon-hydrogen bonds. Hydroxylates fatty acids specifically at the omega-1 position displaying the highest catalytic activity for saturated fatty acids. May be involved in the oxidative metabolism of xenobiotics. In Rattus norvegicus (Rat), this protein is Cytochrome P450 2E1.